The following is a 260-amino-acid chain: Alpha-acetolactate decarboxylase (260 aa).

It belongs to the alpha-acetolactate decarboxylase family.

It carries out the reaction (2S)-2-acetolactate + H(+) = (R)-acetoin + CO2. It participates in polyol metabolism; (R,R)-butane-2,3-diol biosynthesis; (R,R)-butane-2,3-diol from pyruvate: step 2/3. Functionally, converts acetolactate into acetoin, which can be excreted by the cells. This may be a mechanism for controlling the internal pH of cells in the stationary stage. This chain is Alpha-acetolactate decarboxylase (budA), found in Klebsiella aerogenes (Enterobacter aerogenes).